The chain runs to 124 residues: Putative iron-sulfur cluster insertion protein ErpA 2 (124 aa).

Residues C52, C116, and C118 each contribute to the iron-sulfur cluster site.

Belongs to the HesB/IscA family. As to quaternary structure, homodimer. Requires iron-sulfur cluster as cofactor.

In terms of biological role, required for insertion of 4Fe-4S clusters. The sequence is that of Putative iron-sulfur cluster insertion protein ErpA 2 from Burkholderia vietnamiensis (strain G4 / LMG 22486) (Burkholderia cepacia (strain R1808)).